The sequence spans 266 residues: Probable carboxylesterase Os04g0669500 (266 aa).

Residues Ser-154, Asp-208, and His-240 each act as charge relay system in the active site.

The protein belongs to the AB hydrolase superfamily. AB hydrolase 2 family.

Functionally, possesses carboxylesterase activity in vitro. This chain is Probable carboxylesterase Os04g0669500, found in Oryza sativa subsp. japonica (Rice).